Consider the following 512-residue polypeptide: Putative B3 domain-containing protein REM4 (512 aa).

Residues 11–103 (NKAFFIIDLS…VFHVSPFGRS (93 aa)) constitute a DNA-binding region (TF-B3 1). Residues 111 to 145 (SSSTSDDDDDERTVFDDDEDDDVGDDDDNSISEDD) form a disordered region. Over residues 115–145 (SDDDDDERTVFDDDEDDDVGDDDDNSISEDD) the composition is skewed to acidic residues. DNA-binding regions (TF-B3) lie at residues 169–265 (YLVA…LCPN) and 307–403 (ILTF…CSKV). The interval 408–465 (SSDGHKTADRKPRMTDQAPLAEEQTDNRVEKRAQVTEEGGPSRSTRADPGNLQQKQPC) is disordered. Composition is skewed to basic and acidic residues over residues 410–421 (DGHKTADRKPRM) and 432–442 (TDNRVEKRAQV).

It localises to the nucleus. This Arabidopsis thaliana (Mouse-ear cress) protein is Putative B3 domain-containing protein REM4 (REM4).